Reading from the N-terminus, the 408-residue chain is Na(+)/H(+) antiporter NhaA (408 aa).

A run of 12 helical transmembrane segments spans residues 42-62 (LMFVAALALLLANSPFAPVYF), 69-89 (VLGLTVLHWINDALMAVFFLL), 110-130 (ALPGIAALGGMVVPAVIFIAV), 140-160 (GWAIPSATDIAFALGVLSLLG), 169-189 (IFLTALAILDDLGAVLIIALF), 192-212 (AELTPLMLILAAATLLGLAAL), 215-235 (FGVKPLAPYLVLGVVLWFFVL), 238-258 (GIHATLAGVALALAIPLQAST), 277-297 (VAFLIVPVFGFANAGVSFAGL), 312-332 (LGLFFGKQVGVFGFAWLAIWL), 346-366 (LYGVAVLCGIGFTMSLFIGLL), and 380-400 (IGVLLGSTLAGLIGWLILRVT).

It belongs to the NhaA Na(+)/H(+) (TC 2.A.33) antiporter family.

It localises to the cell inner membrane. It carries out the reaction Na(+)(in) + 2 H(+)(out) = Na(+)(out) + 2 H(+)(in). Its function is as follows. Na(+)/H(+) antiporter that extrudes sodium in exchange for external protons. This chain is Na(+)/H(+) antiporter NhaA, found in Nitrobacter hamburgensis (strain DSM 10229 / NCIMB 13809 / X14).